Reading from the N-terminus, the 1038-residue chain is Importin-7 (1038 aa).

Position 1 is an N-acetylmethionine (Met1). The 80-residue stretch at 22 to 101 (AERQLNEAHK…RENIVEAIIH (80 aa)) folds into the Importin N-terminal domain. Residues 881–910 (EHENDSDDDEDAEDDDETEELGSDEDDIDE) are disordered. A compositionally biased stretch (acidic residues) spans 884 to 910 (NDSDDDEDAEDDDETEELGSDEDDIDE). At Ser886 the chain carries Phosphoserine. The residue at position 898 (Thr898) is a Phosphothreonine. Ser903 and Ser1020 each carry phosphoserine.

The protein belongs to the importin beta family. As to quaternary structure, forms a heterodimer with KPNB1. Interacts with histone H1. Interacts with H2A, H2B, H3 and H4 histones. Interacts with SNUPN and XPO1. Interacts with RPS7 and RPL5. Interacts with RPL23A (via BIB domain). Binds directly to nuclear pore complexes. Interacts with SMAD4 and NUP93; translocates SMAD4 to the nucleus through the NPC upon BMP7 stimulation resulting in activation of SMAD4 signaling. Interacts with phosphorylated SMAD2; the interaction facilitates translocation of SMAD2 to the nucleus. Interacts with SRP19. Interacts with RUNX2; the interaction inhibits RUNX2 nuclear translocation in osteoblasts. Interacts with HDAC6, DLX3 and KLF4; the interaction facilitates HDAC6, DLX3 and KLF4 nuclear translocation in dental papilla cells.

The protein resides in the cytoplasm. It localises to the nucleus. Functionally, functions in nuclear protein import, either by acting as autonomous nuclear transport receptor or as an adapter-like protein in association with the importin-beta subunit KPNB1. Acting autonomously is thought to serve itself as receptor for nuclear localization signals (NLS) and to promote translocation of import substrates through the nuclear pore complex (NPC) by an energy requiring, Ran-dependent mechanism. At the nucleoplasmic side of the NPC, Ran binds to importin, the importin/substrate complex dissociates and importin is re-exported from the nucleus to the cytoplasm where GTP hydrolysis releases Ran. Mediates autonomously the nuclear import of ribosomal proteins RPL23A, RPS7 and RPL5. In association with KPNB1 mediates the nuclear import of H1 histone and the Ran-binding site of IPO7 is not required but synergizes with that of KPNB1 in importin/substrate complex dissociation. Promotes odontoblast differentiation via promoting nuclear translocation of DLX3, KLF4, SMAD2, thereby facilitating the transcription of target genes that play a role in odontoblast differentiation. Facilitates BMP4-induced translocation of SMAD1 to the nucleus and recruitment to the MSX1 gene promoter, thereby promotes the expression of the odontogenic regulator MSX1 in dental mesenchymal cells. Also promotes odontoblast differentiation by facilitating the nuclear translocation of HDAC6 and subsequent repression of RUNX2 expression. Inhibits osteoblast differentiation by inhibiting nuclear translocation of RUNX2 and therefore inhibition of RUNX2 target gene transcription. In vitro, mediates nuclear import of H2A, H2B, H3 and H4 histones. The protein is Importin-7 (Ipo7) of Mus musculus (Mouse).